Here is a 61-residue protein sequence, read N- to C-terminus: Furostanol glycoside 26-O-beta-glucosidase (61 aa).

D33 acts as the Proton donor/acceptor in catalysis. D33 serves as a coordination point for D-glucose.

It belongs to the glycosyl hydrolase 3 family. In terms of assembly, monomer. Glycosylated. Expressed in petioles and leaves, but not in fruits.

The catalysed reaction is protodioscin + H2O = 26-deglucoprotodioscin + D-glucose. Inhibited by Hg(2+) and D-glucono-1,5-lactone. Beta-glucosidase highly specific for the cleavage of C-26-bound glucose moiety of furostanol glycosides torvosides A and H. Hydrolyzes only p-nitrophenyl-beta-glucoside, but not p-nitrophenyl-beta-D-fucoside, p-nitrophenyl-beta-L-fucoside, p-nitrophenyl-beta-D-xyloside, p-nitrophenyl-beta-D-galactoside, p-nitrophenyl-beta-D-NAc-glucosamine, p-nitrophenyl-beta-D-mannoside or any of the p-nitrophenyl-alpha-glycosides tested. This Solanum torvum (Turkey berry) protein is Furostanol glycoside 26-O-beta-glucosidase.